A 232-amino-acid chain; its full sequence is Ashwin (232 aa).

Composition is skewed to basic and acidic residues over residues 64-97 (DLPKSRWGKMMEKKREQHEIKKETKRSSPADGLR) and 116-127 (KKTENGDNDRLR). Positions 64–232 (DLPKSRWGKM…KRKIQHVTWP (169 aa)) are disordered. Over residues 130-140 (PQASATSNTFR) the composition is skewed to polar residues. S143 is modified (phosphoserine). A compositionally biased stretch (low complexity) spans 144–156 (DSSSSVSPLVLSS). The segment covering 163 to 179 (KMEHGNNDNKQNHDLTH) has biased composition (basic and acidic residues). Residues S182, S189, and S193 each carry the phosphoserine modification. T198 carries the phosphothreonine modification.

It belongs to the ashwin family. Component of the tRNA-splicing ligase complex.

It is found in the nucleus. The polypeptide is Ashwin (Bos taurus (Bovine)).